A 309-amino-acid chain; its full sequence is Homoserine kinase (309 aa).

91–101 (PIGSGLGSSAC) serves as a coordination point for ATP.

Belongs to the GHMP kinase family. Homoserine kinase subfamily.

It is found in the cytoplasm. The enzyme catalyses L-homoserine + ATP = O-phospho-L-homoserine + ADP + H(+). Its pathway is amino-acid biosynthesis; L-threonine biosynthesis; L-threonine from L-aspartate: step 4/5. Catalyzes the ATP-dependent phosphorylation of L-homoserine to L-homoserine phosphate. This Salmonella agona (strain SL483) protein is Homoserine kinase.